We begin with the raw amino-acid sequence, 136 residues long: Small ribosomal subunit protein bS6 (136 aa).

The interval Gln99–Glu136 is disordered. Basic and acidic residues predominate over residues Leu103–Glu136.

Belongs to the bacterial ribosomal protein bS6 family.

Functionally, binds together with bS18 to 16S ribosomal RNA. The chain is Small ribosomal subunit protein bS6 from Azotobacter vinelandii (strain DJ / ATCC BAA-1303).